Here is a 572-residue protein sequence, read N- to C-terminus: Probable serine/threonine-protein kinase At1g54610 (572 aa).

A disordered region spans residues 1–89 (MGCVFGREAA…SNPSKHWRGE (89 aa)). Residues 9–40 (AATTTTAEAKQAKSSKASSGVVVVGESSVTKS) show a composition bias toward low complexity. Positions 47–67 (DVEKKKNEEANGDKERKSSKG) are enriched in basic and acidic residues. The span at 74 to 83 (KPNPRLSNPS) shows a compositional bias: polar residues. A Protein kinase domain is found at 118–402 (FEKIDKIGQG…ASAALKSEFF (285 aa)). ATP is bound by residues 124–132 (IGQGTYSNV) and lysine 147. The Proton acceptor role is filled by aspartate 242. Disordered stretches follow at residues 409-474 (CEPA…NVDR) and 526-572 (SSFN…AVVA). The span at 419 to 434 (PSKEIDAKRRDEETRR) shows a compositional bias: basic and acidic residues. Over residues 554–572 (SRKKKDNTKSSKGKRAVVA) the composition is skewed to basic residues.

This sequence belongs to the protein kinase superfamily. Ser/Thr protein kinase family.

It catalyses the reaction L-seryl-[protein] + ATP = O-phospho-L-seryl-[protein] + ADP + H(+). The enzyme catalyses L-threonyl-[protein] + ATP = O-phospho-L-threonyl-[protein] + ADP + H(+). The polypeptide is Probable serine/threonine-protein kinase At1g54610 (Arabidopsis thaliana (Mouse-ear cress)).